A 404-amino-acid chain; its full sequence is Cysteine desulfurase IscS (404 aa).

Pyridoxal 5'-phosphate-binding positions include alanine 75 to threonine 76, asparagine 155, glutamine 183, and serine 203 to histidine 205. At lysine 206 the chain carries N6-(pyridoxal phosphate)lysine. Threonine 243 is a pyridoxal 5'-phosphate binding site. Residue cysteine 328 is the Cysteine persulfide intermediate of the active site. Cysteine 328 contacts [2Fe-2S] cluster.

The protein belongs to the class-V pyridoxal-phosphate-dependent aminotransferase family. NifS/IscS subfamily. Homodimer. Forms a heterotetramer with IscU, interacts with other sulfur acceptors. The cofactor is pyridoxal 5'-phosphate.

It is found in the cytoplasm. It catalyses the reaction (sulfur carrier)-H + L-cysteine = (sulfur carrier)-SH + L-alanine. It functions in the pathway cofactor biosynthesis; iron-sulfur cluster biosynthesis. In terms of biological role, master enzyme that delivers sulfur to a number of partners involved in Fe-S cluster assembly, tRNA modification or cofactor biosynthesis. Catalyzes the removal of elemental sulfur atoms from cysteine to produce alanine. Functions as a sulfur delivery protein for Fe-S cluster synthesis onto IscU, an Fe-S scaffold assembly protein, as well as other S acceptor proteins. The chain is Cysteine desulfurase IscS from Shewanella halifaxensis (strain HAW-EB4).